The sequence spans 698 residues: Polyribonucleotide nucleotidyltransferase (698 aa).

Mg(2+) contacts are provided by aspartate 485 and aspartate 491. In terms of domain architecture, KH spans proline 552–isoleucine 611. Positions glycine 621–lysine 689 constitute an S1 motif domain.

This sequence belongs to the polyribonucleotide nucleotidyltransferase family. In terms of assembly, component of the RNA degradosome, which is a multiprotein complex involved in RNA processing and mRNA degradation. Requires Mg(2+) as cofactor.

It localises to the cytoplasm. The catalysed reaction is RNA(n+1) + phosphate = RNA(n) + a ribonucleoside 5'-diphosphate. Its function is as follows. Involved in mRNA degradation. Catalyzes the phosphorolysis of single-stranded polyribonucleotides processively in the 3'- to 5'-direction. This Shewanella denitrificans (strain OS217 / ATCC BAA-1090 / DSM 15013) protein is Polyribonucleotide nucleotidyltransferase.